The primary structure comprises 268 residues: Interferon alpha/beta receptor 2 (268 aa).

The N-terminal stretch at 1–16 is a signal peptide; sequence MGPWTLLLLHLPLVVS. Over 17-223 the chain is Extracellular; sequence MLPAPTNVSI…TSPTAANTVP (207 aa). Fibronectin type-III domains are found at residues 18-114 and 115-217; these read LPAP…LTDT and LLGP…TSPT. Intrachain disulfides connect cysteine 65–cysteine 74 and cysteine 191–cysteine 211. Residues 224-244 traverse the membrane as a helical segment; sequence VVLSVLCAFSLLVVLLCGIVV. Residues 245-268 lie on the Cytoplasmic side of the membrane; it reads YSGRLLCMHKPLPKTLSSVPLCGG.

It belongs to the type II cytokine receptor family. Heterodimer with IFNAR1; forming the receptor for type I interferon.

Its subcellular location is the cell membrane. It localises to the cytoplasm. Functionally, together with IFNAR1, forms the heterodimeric receptor for type I interferons (including interferons alpha, beta, epsilon, omega and kappa). Type I interferon binding activates the JAK-STAT signaling cascade, resulting in transcriptional activation or repression of interferon-regulated genes that encode the effectors of the interferon response. Mechanistically, type I interferon-binding brings the IFNAR1 and IFNAR2 subunits into close proximity with one another, driving their associated Janus kinases (JAKs) (TYK2 bound to IFNAR1 and JAK1 bound to IFNAR2) to cross-phosphorylate one another. The activated kinases phosphorylate specific tyrosine residues on the intracellular domains of IFNAR1 and IFNAR2, forming docking sites for the STAT transcription factors (STAT1, STAT2 and STAT). STAT proteins are then phosphorylated by the JAKs, promoting their translocation into the nucleus to regulate expression of interferon-regulated genes. This Oncorhynchus mykiss (Rainbow trout) protein is Interferon alpha/beta receptor 2.